The following is a 185-amino-acid chain: Histone H1-delta (185 aa).

Disordered stretches follow at residues 1–37 and 90–185; these read MADT…PKYS and RHVK…GKKK. In terms of domain architecture, H15 spans 32-105; the sequence is SHPKYSDMIA…GASGSFLLAE (74 aa). Over residues 109–185 the composition is skewed to basic residues; it reads TPKKAAAKKA…KAAKGKGKKK (77 aa).

The protein belongs to the histone H1/H5 family.

The protein resides in the nucleus. It is found in the chromosome. In terms of biological role, histones H1 are necessary for the condensation of nucleosome chains into higher-order structures. This chain is Histone H1-delta, found in Strongylocentrotus purpuratus (Purple sea urchin).